The sequence spans 529 residues: GMP synthase [glutamine-hydrolyzing] (529 aa).

Residues 3-204 form the Glutamine amidotransferase type-1 domain; that stretch reads TVAIVDFGSQ…FLKIAGCTRD (202 aa). Cys87 (nucleophile) is an active-site residue. Residues His179 and Glu181 contribute to the active site. In terms of domain architecture, GMPS ATP-PPase spans 205–395; sequence WTMGSFLHTQ…LGLPSAILDR (191 aa). 232 to 238 contacts ATP; it reads SGGVDSS.

Homodimer.

It carries out the reaction XMP + L-glutamine + ATP + H2O = GMP + L-glutamate + AMP + diphosphate + 2 H(+). It participates in purine metabolism; GMP biosynthesis; GMP from XMP (L-Gln route): step 1/1. Its function is as follows. Catalyzes the synthesis of GMP from XMP. The sequence is that of GMP synthase [glutamine-hydrolyzing] from Anaplasma marginale (strain St. Maries).